The chain runs to 88 residues: ATP synthase F(0) complex subunit f, mitochondrial (88 aa).

Ala-2 is subject to N-acetylalanine. Phosphoserine is present on Ser-3. Position 16 is an N6-acetyllysine (Lys-16). A helical membrane pass occupies residues Met-62–Leu-79.

The protein belongs to the ATPase F chain family. In terms of assembly, component of the ATP synthase complex composed at least of ATP5F1A/subunit alpha, ATP5F1B/subunit beta, ATP5MC1/subunit c (homooctomer), MT-ATP6/subunit a, MT-ATP8/subunit 8, ATP5ME/subunit e, ATP5MF/subunit f, ATP5MG/subunit g, ATP5MK/subunit k, ATP5MJ/subunit j, ATP5F1C/subunit gamma, ATP5F1D/subunit delta, ATP5F1E/subunit epsilon, ATP5PF/subunit F6, ATP5PB/subunit b, ATP5PD/subunit d, ATP5PO/subunit OSCP. ATP synthase complex consists of a soluble F(1) head domain (subunits alpha(3) and beta(3)) - the catalytic core - and a membrane F(0) domain - the membrane proton channel (subunits c, a, 8, e, f, g, k and j). These two domains are linked by a central stalk (subunits gamma, delta, and epsilon) rotating inside the F1 region and a stationary peripheral stalk (subunits F6, b, d, and OSCP).

It localises to the mitochondrion. The protein resides in the mitochondrion inner membrane. Subunit f, of the mitochondrial membrane ATP synthase complex (F(1)F(0) ATP synthase or Complex V) that produces ATP from ADP in the presence of a proton gradient across the membrane which is generated by electron transport complexes of the respiratory chain. ATP synthase complex consist of a soluble F(1) head domain - the catalytic core - and a membrane F(1) domain - the membrane proton channel. These two domains are linked by a central stalk rotating inside the F(1) region and a stationary peripheral stalk. During catalysis, ATP synthesis in the catalytic domain of F(1) is coupled via a rotary mechanism of the central stalk subunits to proton translocation. In vivo, can only synthesize ATP although its ATP hydrolase activity can be activated artificially in vitro. Part of the complex F(0) domain. The polypeptide is ATP synthase F(0) complex subunit f, mitochondrial (Sus scrofa (Pig)).